Reading from the N-terminus, the 1133-residue chain is MDTHTLKSVSDLPGNFRSAFSFRYFNSLQSECFPLCFHSDINMIISAPTGSGKTVLFELCILRLFSKSISKEGSFLHAKGALKTVYISPSKALVQEKLRDWNQKFNSWGISCLELTGDNETYSTKNIQDADIILTTPEKFDAVSRYRVTSGGLGFFSDIALVLIDEVHLLNDPRGAALEAIVSRLKILSSNHELRSSTLASVRLLAVSATIPNIEDLAEWLKVPTAGIKRFGEEMRPVKLTTKVFGYAAAKNDFLFEKRLQNYIYDILMQYSKGKSALVFCSTRKGAQEAAQKLAQTAMTYGYSNPFIKSREQLERLREASPMCSDKQMQSYILQGVGYHNGGLCQKDRSLVEGLFLNGDIQVICTTNTLAHGINLPAHTVVIKSTQHFNKEKGHYMEYDRSTLLQMSGRAGRPPFDDTGMVIIMTRRETVHLYENLLNGCEVVESQLLPCLIEHLTAEIVQLTISDITRAIEWMKCSYLYVRMKKNPENYAIKKGIPKDRVEKHLQELCLQKINELSQYQMIWTDTDGFVLKPEEPGRLMTKYYLKFETMKYIINTPTSYSLDEALHIVCHAEEISWIQLRRNEKKTLNDVNADKEGRLRFHINDNKGKRKKRIQTREEKLFVLANDWLTGDPSVHDLSMTQDANSICSNGSRIARCMKEYFIYKKNYKGTLSSTLLAKSLYQKLWDDSPYLLKQLPGIGMVTAKALHSMGVRSFEALAEADPRRIEIVTGRKYPFGNTIKESLSSLPPKVEIKVEEVDCQKQGISKLAVTLSRVSQPLQSTKRHYADLIVGSEEENLIHFHEKIRMEDFSSPYSVTVLLERPHQQTKVTVKADLIFEEYIGIDLHETLLLKKANNNKVNYKSENRMPQYYPPMASACIADDDNPVTSGPSNRKDKKDDMPSFKLIDDDSEEEKEPYVTMEEDDCVIINEHTVFDHIREKAKCFPSLNPLNPTSSPASGKSILKRKSLVENNSPELDPLFQYDSVFDLPTNTKDIKQSAQQITSPGYASFAEKTETERPFSDETIFNYIRKRSKNSPALATSKIENPITISSQEGRNAEISPYRTYGLLVSPATKIPRITSDAPSEILSFDISMVKRSDTSLEQTKGFCSTLAGKSNVSDSFLGFKSIFSFL.

One can recognise a Helicase ATP-binding domain in the interval 34-229 (PLCFHSDINM…WLKVPTAGIK (196 aa)). 47–54 (APTGSGKT) is a binding site for ATP. A DEVH box motif is present at residues 165–168 (DEVH). The Helicase C-terminal domain occupies 263 to 460 (YIYDILMQYS…CLIEHLTAEI (198 aa)). Positions 536 to 847 (EPGRLMTKYY…FEEYIGIDLH (312 aa)) constitute an SEC63 domain. The segment at 878-919 (ACIADDDNPVTSGPSNRKDKKDDMPSFKLIDDDSEEEKEPYV) is disordered. The segment covering 893–908 (NRKDKKDDMPSFKLID) has biased composition (basic and acidic residues). The span at 909–919 (DDSEEEKEPYV) shows a compositional bias: acidic residues.

The protein belongs to the helicase family. SKI2 subfamily. Expressed in meiocytes during meiosis.

The protein localises to the nucleus. The catalysed reaction is Couples ATP hydrolysis with the unwinding of duplex DNA by translocating in the 3'-5' direction.. It carries out the reaction ATP + H2O = ADP + phosphate + H(+). Its function is as follows. DNA helicase required for crossover formation, complete synapsis of homologous chromosomes and bivalent formation during meiosis. Is specific to recombination events resulting in interference-sensitive crossovers (class I meiotic crossover). The chain is ATP-dependent DNA helicase homolog MER3 from Arabidopsis thaliana (Mouse-ear cress).